The following is a 155-amino-acid chain: Putative pre-16S rRNA nuclease (155 aa).

This sequence belongs to the YqgF nuclease family.

The protein localises to the cytoplasm. In terms of biological role, could be a nuclease involved in processing of the 5'-end of pre-16S rRNA. The chain is Putative pre-16S rRNA nuclease from Xanthomonas axonopodis pv. citri (strain 306).